The primary structure comprises 450 residues: Benzene 1,2-dioxygenase subunit alpha (450 aa).

Residues 54–163 (WLLLGHETQI…VETYKGLIFA (110 aa)) enclose the Rieske domain. Positions 96, 98, 116, and 119 each coordinate [2Fe-2S] cluster. Fe cation contacts are provided by H222 and H228.

It belongs to the bacterial ring-hydroxylating dioxygenase alpha subunit family. This dioxygenase system consists of four proteins: the two subunits of the hydroxylase component (BnzA and BnzB), a ferredoxin (BnzC) and a ferredoxin reductase (BnzD). Requires [2Fe-2S] cluster as cofactor. Fe cation serves as cofactor.

It carries out the reaction benzene + NADH + O2 + H(+) = cis-1,2-dihydrobenzene-1,2-diol + NAD(+). The enzyme catalyses toluene + NADH + O2 + H(+) = (1S,2R)-3-methylcyclohexa-3,5-diene-1,2-diol + NAD(+). It participates in aromatic compound metabolism; benzene degradation; catechol from benzene: step 1/2. The protein operates within xenobiotic degradation; toluene degradation. It functions in the pathway xenobiotic degradation; xylene degradation. Catalyzes both the oxidation of benzene and toluene. This is Benzene 1,2-dioxygenase subunit alpha (bnzA) from Pseudomonas putida (strain ATCC 700007 / DSM 6899 / JCM 31910 / BCRC 17059 / LMG 24140 / F1).